The chain runs to 310 residues: Malate dehydrogenase (310 aa).

NAD(+)-binding positions include 7–12 and Asp-32; that span reads GAGNVG. 2 residues coordinate substrate: Arg-81 and Arg-87. NAD(+)-binding positions include Asn-94 and 117–119; that span reads VSN. Positions 119 and 150 each coordinate substrate. His-174 functions as the Proton acceptor in the catalytic mechanism.

The protein belongs to the LDH/MDH superfamily. MDH type 3 family.

The enzyme catalyses (S)-malate + NAD(+) = oxaloacetate + NADH + H(+). Functionally, catalyzes the reversible oxidation of malate to oxaloacetate. The sequence is that of Malate dehydrogenase from Chlorobium chlorochromatii (strain CaD3).